Reading from the N-terminus, the 615-residue chain is Mitochondrial distribution and morphology protein 34 (615 aa).

One can recognise an SMP-LTD domain in the interval Met-1–Leu-195. 3 disordered regions span residues Ser-293 to Ser-313, Ala-346 to Asp-566, and Pro-596 to Arg-615. The span at Thr-301–Ser-313 shows a compositional bias: polar residues. Positions Ala-346 to Gly-355 are enriched in low complexity. The span at Arg-356–Arg-367 shows a compositional bias: basic residues. Composition is skewed to polar residues over residues Ile-384–Pro-403, Asp-435–Ser-446, and Val-457–Arg-499. Over residues Gln-517–Gln-557 the composition is skewed to low complexity. A compositionally biased stretch (basic and acidic residues) spans Pro-596–Asp-606.

It belongs to the MDM34 family. Component of the ER-mitochondria encounter structure (ERMES) or MDM complex, composed of mmm-1, mdm10, mdm12 and mdm34.

Its subcellular location is the mitochondrion outer membrane. In terms of biological role, component of the ERMES/MDM complex, which serves as a molecular tether to connect the endoplasmic reticulum (ER) and mitochondria. Components of this complex are involved in the control of mitochondrial shape and protein biogenesis, and function in nonvesicular lipid trafficking between the ER and mitochondria. Mdm34 is required for the interaction of the ER-resident membrane protein mmm-1 and the outer mitochondrial membrane-resident beta-barrel protein mdm10. The chain is Mitochondrial distribution and morphology protein 34 from Neurospora crassa (strain ATCC 24698 / 74-OR23-1A / CBS 708.71 / DSM 1257 / FGSC 987).